A 193-amino-acid polypeptide reads, in one-letter code: Potassium-transporting ATPase KdpC subunit (193 aa).

Residues 14–34 traverse the membrane as a helical segment; the sequence is ITFTFLVLCGLVYPLIVTGIA.

The protein belongs to the KdpC family. In terms of assembly, the system is composed of three essential subunits: KdpA, KdpB and KdpC.

The protein resides in the cell membrane. Part of the high-affinity ATP-driven potassium transport (or Kdp) system, which catalyzes the hydrolysis of ATP coupled with the electrogenic transport of potassium into the cytoplasm. This subunit acts as a catalytic chaperone that increases the ATP-binding affinity of the ATP-hydrolyzing subunit KdpB by the formation of a transient KdpB/KdpC/ATP ternary complex. The protein is Potassium-transporting ATPase KdpC subunit of Bacillus mycoides (strain KBAB4) (Bacillus weihenstephanensis).